The primary structure comprises 156 residues: MAATLTPEQITEYKGIFEMFDEEGNGLVKTDDLESLMSLVGINPTKRDLANMAKDVDKDKKGTFNCDGFLALMGIYHEKSKNQDEELRAAFKVFDKEHKGYIEWDTLKYVLMNAGEPLNEQEAELMMKEADKDGDGTIDYEEFVAMMTGESFKLTQ.

EF-hand domains follow at residues glutamate 8–asparagine 43, proline 44–lysine 79, asparagine 82–proline 117, and leucine 118–lysine 153. Positions 131, 133, 135, 137, and 142 each coordinate Ca(2+).

The protein belongs to the calmodulin family. Calglandulin subfamily. Expressed by the venom gland.

Its subcellular location is the cytoplasm. Its function is as follows. May be involved in the cellular control mechanism of the secretion of toxins from the gland into the venom. The sequence is that of Calglandulin from Bothrops insularis (Golden lancehead).